We begin with the raw amino-acid sequence, 249 residues long: Elongator complex protein 6 homolog (249 aa).

Belongs to the ELP6 family. As to quaternary structure, component of the elongator complex.

It is found in the cytoplasm. The protein resides in the nucleus. Its pathway is tRNA modification; 5-methoxycarbonylmethyl-2-thiouridine-tRNA biosynthesis. Component of the elongator complex which is required for multiple tRNA modifications, including mcm5U (5-methoxycarbonylmethyl uridine), mcm5s2U (5-methoxycarbonylmethyl-2-thiouridine), and ncm5U (5-carbamoylmethyl uridine). The elongator complex catalyzes formation of carboxymethyluridine in the wobble base at position 34 in tRNAs. The protein is Elongator complex protein 6 homolog of Schizosaccharomyces pombe (strain 972 / ATCC 24843) (Fission yeast).